The chain runs to 277 residues: Large ribosomal subunit protein uL2 (277 aa).

Disordered regions lie at residues L37–H58 and G222–R277. Residues V268–R277 show a composition bias toward basic residues.

The protein belongs to the universal ribosomal protein uL2 family. As to quaternary structure, part of the 50S ribosomal subunit. Forms a bridge to the 30S subunit in the 70S ribosome.

In terms of biological role, one of the primary rRNA binding proteins. Required for association of the 30S and 50S subunits to form the 70S ribosome, for tRNA binding and peptide bond formation. It has been suggested to have peptidyltransferase activity; this is somewhat controversial. Makes several contacts with the 16S rRNA in the 70S ribosome. In Parafrankia sp. (strain EAN1pec), this protein is Large ribosomal subunit protein uL2.